The chain runs to 173 residues: Zinc finger A20 and AN1 domain-containing stress-associated protein 2 (173 aa).

An A20-type zinc finger spans residues 12–46 (PEGPKLCTNNCGFFGSAATMNMCSKCHKDMLFQQE). Zn(2+) is bound by residues Cys-18, Cys-22, Cys-34, Cys-37, Cys-114, Cys-117, Cys-128, Cys-130, Cys-135, His-138, His-144, and Cys-146. The segment at 108–154 (PKGPSRCTTCNKRVGLTGFKCRCGSLFCGTHRYADVHDCSFNYHAAA) adopts an AN1-type zinc-finger fold.

May be involved in environmental stress response. The protein is Zinc finger A20 and AN1 domain-containing stress-associated protein 2 (SAP2) of Arabidopsis thaliana (Mouse-ear cress).